The sequence spans 759 residues: Catalase-peroxidase (759 aa).

The tract at residues Met-1 to Asn-24 is disordered. The segment at residues Trp-96 to Tyr-242 is a cross-link (tryptophyl-tyrosyl-methioninium (Trp-Tyr) (with M-268)). The active-site Proton acceptor is the His-97. Residues Tyr-242–Met-268 constitute a cross-link (tryptophyl-tyrosyl-methioninium (Tyr-Met) (with W-96)). His-283 serves as a coordination point for heme b.

Belongs to the peroxidase family. Peroxidase/catalase subfamily. As to quaternary structure, homodimer or homotetramer. Requires heme b as cofactor. Post-translationally, formation of the three residue Trp-Tyr-Met cross-link is important for the catalase, but not the peroxidase activity of the enzyme.

It is found in the cytoplasm. It catalyses the reaction H2O2 + AH2 = A + 2 H2O. The catalysed reaction is 2 H2O2 = O2 + 2 H2O. In terms of biological role, bifunctional enzyme with both catalase and broad-spectrum peroxidase activity. The chain is Catalase-peroxidase from Neosartorya fischeri (strain ATCC 1020 / DSM 3700 / CBS 544.65 / FGSC A1164 / JCM 1740 / NRRL 181 / WB 181) (Aspergillus fischerianus).